The following is a 100-amino-acid chain: NADH-quinone oxidoreductase subunit K (100 aa).

The next 3 helical transmembrane spans lie at 4–24, 28–48, and 60–80; these read LQHG…GLLV, LLFM…AFIV, and VMYI…LALL.

Belongs to the complex I subunit 4L family. As to quaternary structure, NDH-1 is composed of 13 different subunits. Subunits NuoA, H, J, K, L, M, N constitute the membrane sector of the complex.

The protein localises to the cell inner membrane. It catalyses the reaction a quinone + NADH + 5 H(+)(in) = a quinol + NAD(+) + 4 H(+)(out). Functionally, NDH-1 shuttles electrons from NADH, via FMN and iron-sulfur (Fe-S) centers, to quinones in the respiratory chain. The immediate electron acceptor for the enzyme in this species is believed to be ubiquinone. Couples the redox reaction to proton translocation (for every two electrons transferred, four hydrogen ions are translocated across the cytoplasmic membrane), and thus conserves the redox energy in a proton gradient. In Serratia proteamaculans (strain 568), this protein is NADH-quinone oxidoreductase subunit K.